Reading from the N-terminus, the 163-residue chain is 2-C-methyl-D-erythritol 2,4-cyclodiphosphate synthase (163 aa).

A divalent metal cation is bound by residues aspartate 15 and histidine 17. 4-CDP-2-C-methyl-D-erythritol 2-phosphate is bound by residues 15–17 (DFH) and 41–42 (HS). Position 49 (histidine 49) interacts with a divalent metal cation. Residues 63–65 (DIG) and 139–142 (TTNE) each bind 4-CDP-2-C-methyl-D-erythritol 2-phosphate.

Belongs to the IspF family. In terms of assembly, homotrimer. It depends on a divalent metal cation as a cofactor.

The enzyme catalyses 4-CDP-2-C-methyl-D-erythritol 2-phosphate = 2-C-methyl-D-erythritol 2,4-cyclic diphosphate + CMP. The protein operates within isoprenoid biosynthesis; isopentenyl diphosphate biosynthesis via DXP pathway; isopentenyl diphosphate from 1-deoxy-D-xylulose 5-phosphate: step 4/6. Functionally, involved in the biosynthesis of isopentenyl diphosphate (IPP) and dimethylallyl diphosphate (DMAPP), two major building blocks of isoprenoid compounds. Catalyzes the conversion of 4-diphosphocytidyl-2-C-methyl-D-erythritol 2-phosphate (CDP-ME2P) to 2-C-methyl-D-erythritol 2,4-cyclodiphosphate (ME-CPP) with a corresponding release of cytidine 5-monophosphate (CMP). The polypeptide is 2-C-methyl-D-erythritol 2,4-cyclodiphosphate synthase (Gloeobacter violaceus (strain ATCC 29082 / PCC 7421)).